Here is a 437-residue protein sequence, read N- to C-terminus: 3-phosphoshikimate 1-carboxyvinyltransferase (437 aa).

The 3-phosphoshikimate site is built by lysine 21, serine 22, and arginine 26. Residue lysine 21 participates in phosphoenolpyruvate binding. Residues glycine 101 and arginine 129 each coordinate phosphoenolpyruvate. Serine 172, serine 173, glutamine 174, serine 200, aspartate 314, and lysine 341 together coordinate 3-phosphoshikimate. Glutamine 174 provides a ligand contact to phosphoenolpyruvate. The active-site Proton acceptor is aspartate 314. Arginine 345, arginine 388, and lysine 414 together coordinate phosphoenolpyruvate.

This sequence belongs to the EPSP synthase family. As to quaternary structure, monomer.

Its subcellular location is the cytoplasm. It catalyses the reaction 3-phosphoshikimate + phosphoenolpyruvate = 5-O-(1-carboxyvinyl)-3-phosphoshikimate + phosphate. Its pathway is metabolic intermediate biosynthesis; chorismate biosynthesis; chorismate from D-erythrose 4-phosphate and phosphoenolpyruvate: step 6/7. Its function is as follows. Catalyzes the transfer of the enolpyruvyl moiety of phosphoenolpyruvate (PEP) to the 5-hydroxyl of shikimate-3-phosphate (S3P) to produce enolpyruvyl shikimate-3-phosphate and inorganic phosphate. The chain is 3-phosphoshikimate 1-carboxyvinyltransferase from Clostridioides difficile (strain 630) (Peptoclostridium difficile).